Here is a 361-residue protein sequence, read N- to C-terminus: Chorismate synthase (361 aa).

NADP(+) is bound by residues Arg48 and Arg54. FMN-binding positions include 131–133 (RSS), 243–244 (NA), Gly287, 302–306 (KPTSS), and Arg328.

It belongs to the chorismate synthase family. As to quaternary structure, homotetramer. FMNH2 is required as a cofactor.

The catalysed reaction is 5-O-(1-carboxyvinyl)-3-phosphoshikimate = chorismate + phosphate. The protein operates within metabolic intermediate biosynthesis; chorismate biosynthesis; chorismate from D-erythrose 4-phosphate and phosphoenolpyruvate: step 7/7. In terms of biological role, catalyzes the anti-1,4-elimination of the C-3 phosphate and the C-6 proR hydrogen from 5-enolpyruvylshikimate-3-phosphate (EPSP) to yield chorismate, which is the branch point compound that serves as the starting substrate for the three terminal pathways of aromatic amino acid biosynthesis. This reaction introduces a second double bond into the aromatic ring system. The sequence is that of Chorismate synthase from Bradyrhizobium sp. (strain BTAi1 / ATCC BAA-1182).